Consider the following 330-residue polypeptide: Zinc finger protein Gfi-1b (330 aa).

The SNAG domain stretch occupies residues 1-20; the sequence is MPRSFLVKSKKAHTYHQPRV. The segment at 1-42 is disordered; the sequence is MPRSFLVKSKKAHTYHQPRVQEDEPLWPPALTPVPRDQAPSN. K8 bears the N6,N6-dimethyllysine mark. Positions 91 to 330 are interaction with ARIH2; the sequence is GDSPLSDSPP…RHRESQHNLK (240 aa). 6 consecutive C2H2-type zinc fingers follow at residues 163–186, 192–214, 220–242, 248–270, 276–298, and 304–327; these read YHCV…RRSH, FACD…THVH, FECR…LLIH, YPCQ…TYIH, HKCQ…SRKH, and FSCE…ESQH. Residues 164–330 are mediates interaction with GATA1; that stretch reads HCVKCNKVFS…RHRESQHNLK (167 aa).

Component of a RCOR-GFI-KDM1A-HDAC complex. Interacts directly with RCOR1, KDM1A and HDAC2. Forms a complex with GATA1. Interacts with histone methyltransferases EHMT2 and SUV39H1. Interacts with ARIH2 (via RING-type 2). Interacts with RUNX1T1. In terms of processing, methylation at Lys-8 in the SNAG domain seems required for the recruitment of the corepressor complex. Expressed in bone marrow and fetal liver, but also detectable in fetal spleen, fetal thymus, and testes. Detected in hematopoietic stem cells, erythroblasts, and megakaryocytes. Overexpressed in bone marrow of patients with erythroleukemia and megakaryocytic leukemia as well as in their corresponding leukemic cell lines, and markedly repressed in severe aplastic anemia (SAA).

Its subcellular location is the nucleus. Essential proto-oncogenic transcriptional regulator necessary for development and differentiation of erythroid and megakaryocytic lineages. Component of a RCOR-GFI-KDM1A-HDAC complex that suppresses, via histone deacetylase (HDAC) recruitment, a number of genes implicated in multilineage blood cell development and controls hematopoietic differentiation. Transcriptional repressor or activator depending on both promoter and cell type context; represses promoter activity of SOCS1 and SOCS3 and thus, may regulate cytokine signaling pathways. Cooperates with GATA1 to repress target gene transcription, such as the apoptosis regulator BCL2L1; GFI1B silencing in leukemic cell lines markedly increase apoptosis rate. Inhibits down-regulation of MYC and MYB as well as the cyclin-dependent kinase inhibitor CDKN1A/P21WAF1 in IL6-treated myelomonocytic cells. Represses expression of GATA3 in T-cell lymphomas and inhibits GATA1-mediated transcription; as GATA1 also mediates erythroid GFI1B transcription, both GATA1 and GFI1B participate in a feedback regulatory pathway controlling the expression of GFI1B gene in erythroid cells. Suppresses GATA1-mediated stimulation of GFI1B promoter through protein interaction. Binds to gamma-satellite DNA and to its own promoter, auto-repressing its own expression. Alters histone methylation by recruiting histone methyltransferase to target genes promoters. Plays a role in heterochromatin formation. The sequence is that of Zinc finger protein Gfi-1b (GFI1B) from Homo sapiens (Human).